The primary structure comprises 251 residues: Prolactin-7C1 (251 aa).

Positions 1–30 (MLLSLTHPSFLAMLPMLLMSNLLQWEGVTS) are cleaved as a signal peptide. N57 carries N-linked (GlcNAc...) asparagine glycosylation. Cystine bridges form between C101/C217 and C234/C242.

Belongs to the somatotropin/prolactin family. In terms of tissue distribution, expressed exclusively in the placenta. Expressed in spongiotrophoblast cells and trophoblast giant cells of the junctional zone and in labyrinthine trophoblast.

The protein localises to the secreted. In Mus musculus (Mouse), this protein is Prolactin-7C1 (Prl7c1).